Here is a 102-residue protein sequence, read N- to C-terminus: Neuropeptide F (102 aa).

Positions 1 to 29 are cleaved as a signal peptide; it reads MSNTMRCILIVCVALTLIAAGCNVEASNS. A propeptide spanning residues 30–32 is cleaved from the precursor; it reads RPP. Phenylalanine 62 is modified (phenylalanine amide). Residues 66-102 constitute a propeptide that is removed on maturation; the sequence is GGPLMEMLRNRELENNMAKSINSGGELIRALDEEEVF.

It belongs to the NPY family.

It is found in the secreted. In terms of biological role, an integral part of the sensory system that mediates food signaling, providing the neural basis for the regulation of food response; coordinates larval foraging and social behavior changes during development. May have a hormonal role in females. In Drosophila pseudoobscura pseudoobscura (Fruit fly), this protein is Neuropeptide F.